The chain runs to 1708 residues: Rapamycin-insensitive companion of mTOR (1708 aa).

The segment at 1–789 (MAAIGRGRSL…DKANLHALIQ (789 aa)) is interaction with NBN. Phosphoserine occurs at positions 21, 35, and 265. A Glycyl lysine isopeptide (Lys-Gly) (interchain with G-Cter in ubiquitin) cross-link involves residue K274. The interval 521–570 (LKDTEEALLINLRDSQVLQHKENLDWDWNLIGTILKWPNVNLRNYKDEQL) is ribosome-binding domain. Positions 543, 572, and 576 each coordinate ATP. Residues 1021 to 1043 (TLSLNSESTSSRHNSESESAPSS) are compositionally biased toward low complexity. The disordered stretch occupies residues 1021–1045 (TLSLNSESTSSRHNSESESAPSSMF). N6-acetyllysine occurs at positions 1092 and 1095. Disordered stretches follow at residues 1101–1198 (SLTL…ENTS) and 1218–1247 (SFNT…PTAM). Phosphothreonine is present on T1103. Residues K1116, K1119, and K1125 each carry the N6-acetyllysine modification. T1135 is modified (phosphothreonine; by RPS6KB1). Phosphoserine is present on S1138. Residues 1147–1158 (FTSSSAQKSLQL) are compositionally biased toward polar residues. Phosphoserine is present on residues S1161, S1218, and S1234. The segment covering 1221–1239 (TDTTTSGISSMSSSPSRET) has biased composition (low complexity). The residue at position 1270 (T1270) is a Phosphothreonine. S1273, S1277, S1281, and S1283 each carry phosphoserine. T1294 carries the post-translational modification Phosphothreonine. A phosphoserine mark is found at S1301 and S1312. A Phosphothreonine modification is found at T1331. A phosphoserine mark is found at S1345 and S1352. Residue T1375 is modified to Phosphothreonine. S1384 carries the post-translational modification Phosphoserine. Position 1385 is a phosphotyrosine (Y1385). S1387, S1395, and S1410 each carry phosphoserine. 3 residues coordinate Zn(2+): H1514, C1519, and C1522. 4 positions are modified to phosphoserine: S1570, S1573, S1576, and S1591. C1651 lines the Zn(2+) pocket.

This sequence belongs to the RICTOR family. As to quaternary structure, component of the mechanistic target of rapamycin complex 2 (mTORC2), consisting in two heterotretramers composed of MTOR, MLST8, RICTOR and MAPKAP1/SIN1. The mTORC2 core complex associates with PRR5/PROTOR1 and/or PRR5L/PROTOR2. Contrary to mTORC1, mTORC2 does not bind to and is not sensitive to FKBP12-rapamycin. Binds directly to MTOR and PRR5 within the TORC2 complex; interaction with MTOR is enhanced by deubiquitination of RICTOR by USP9X. Interaction with MAPKAP1 is not enhanced by RICTOR deubiquitination by USP9X. Interacts with CCDC28B. Interacts with NBN. Interacts with SIK3. Interacts with NCKAP1L. Interacts with ARMH4 (via cytoplasmic tail); this interaction bridges ARMH4 to the mTORC2 complex and inhibits the mTORC2 kinase activity. Interacts with UBXN2A. Interacts with TSPAN8. Post-translationally, phosphorylated by MTOR; when part of mTORC2. Phosphorylated at Thr-1135 by RPS6KB1 downstream of the mTORC1 complex: phosphorylation of RICTOR inhibits mTORC2 signaling by creating a binding site for 14-3-3 proteins. Phosphorylated at Ser-1234 by GSK3B in response to endoplasmic stress, inhibiting mTORC2 signaling. In terms of processing, ubiquitinated by the SCF(FBXW7) complex, leading to its degradation by the proteasome. Deubiquitinated by USP9X; deubiquitination stabilizes RICTOR and enhances its binding to MTOR, thus promoting mTORC2 complex assembly. Acetylated by EP300/p300 in response to glucose, leading to activate the mTORC2 complex. Acetylation by BLOC1S1/GCN5L1 in response to hypotoxic stress protects RICTOR against ubiquitination and subsequent degradation by the proteasome. In terms of tissue distribution, highest levels in liver and brain with expression also detected in heart, muscle, spleen and kidney (at protein level).

It localises to the cell membrane. It is found in the endoplasmic reticulum membrane. Its subcellular location is the lysosome membrane. Component of the mechanistic target of rapamycin complex 2 (mTORC2), which transduces signals from growth factors to pathways involved in proliferation, cytoskeletal organization, lipogenesis and anabolic output. In response to growth factors, mTORC2 phosphorylates and activates AGC protein kinase family members, including AKT (AKT1, AKT2 and AKT3), PKC (PRKCA, PRKCB and PRKCE) and SGK1. In contrast to mTORC1, mTORC2 is nutrient-insensitive. Within the mTORC2 complex, RICTOR probably acts as a molecular adapter. RICTOR is responsible for the FKBP12-rapamycin-insensitivity of mTORC2. mTORC2 plays a critical role in AKT1 activation by mediating phosphorylation of different sites depending on the context, such as 'Thr-450', 'Ser-473', 'Ser-477' or 'Thr-479', facilitating the phosphorylation of the activation loop of AKT1 on 'Thr-308' by PDPK1/PDK1 which is a prerequisite for full activation. mTORC2 catalyzes the phosphorylation of SGK1 at 'Ser-422' and of PRKCA on 'Ser-657'. The mTORC2 complex also phosphorylates various proteins involved in insulin signaling, such as FBXW8 and IGF2BP1. mTORC2 acts upstream of Rho GTPases to regulate the actin cytoskeleton, probably by activating one or more Rho-type guanine nucleotide exchange factors. mTORC2 promotes the serum-induced formation of stress-fibers or F-actin. Plays an essential role in embryonic growth and development. The chain is Rapamycin-insensitive companion of mTOR from Mus musculus (Mouse).